The following is a 336-amino-acid chain: F420-dependent glucose-6-phosphate dehydrogenase (336 aa).

Aspartate 39 lines the coenzyme F420-(gamma-Glu)n pocket. Histidine 40 functions as the Proton donor in the catalytic mechanism. Coenzyme F420-(gamma-Glu)n is bound by residues threonine 76 and 107 to 108 (TG). Glutamate 109 serves as the catalytic Proton acceptor. Coenzyme F420-(gamma-Glu)n is bound by residues asparagine 112, 177–178 (GG), and 180–181 (EV). The substrate site is built by threonine 195, lysine 198, lysine 259, and arginine 283.

It belongs to the F420-dependent glucose-6-phosphate dehydrogenase family. Homodimer.

It carries out the reaction oxidized coenzyme F420-(gamma-L-Glu)(n) + D-glucose 6-phosphate + H(+) = 6-phospho-D-glucono-1,5-lactone + reduced coenzyme F420-(gamma-L-Glu)(n). Catalyzes the coenzyme F420-dependent oxidation of glucose 6-phosphate (G6P) to 6-phosphogluconolactone. Appears to have a role in resistance to oxidative stress, via its consumption of G6P that serves as a source of reducing power to combat oxidative stress in mycobacteria. This is F420-dependent glucose-6-phosphate dehydrogenase from Mycobacterium leprae (strain Br4923).